The sequence spans 223 residues: Large ribosomal subunit protein bL25 (223 aa).

A disordered region spans residues 198–223 (EEIGDRPRSAEEGAAPVKERKLRESE).

The protein belongs to the bacterial ribosomal protein bL25 family. CTC subfamily. In terms of assembly, part of the 50S ribosomal subunit; part of the 5S rRNA/L5/L18/L25 subcomplex. Contacts the 5S rRNA. Binds to the 5S rRNA independently of L5 and L18.

In terms of biological role, this is one of the proteins that binds to the 5S RNA in the ribosome where it forms part of the central protuberance. This is Large ribosomal subunit protein bL25 from Thermomicrobium roseum (strain ATCC 27502 / DSM 5159 / P-2).